Here is a 567-residue protein sequence, read N- to C-terminus: TNF receptor-associated factor 3 (567 aa).

The segment at 1–26 (MESSKKMDAAGTLQPNPPLKLQPDRG) is disordered. Residue Cys-55 forms a Glycyl cysteine thioester (Cys-Gly) (interchain with G-Cter in ubiquitin) linkage. The segment at 67 to 76 (CGHRFCESCM) adopts an RING-type zinc-finger fold. Lys-106 participates in a covalent cross-link: Glycyl lysine isopeptide (Lys-Gly) (interchain with G-Cter in ubiquitin). Cys-123 participates in a covalent cross-link: Glycyl cysteine thioester (Cys-Gly) (interchain with G-Cter in ubiquitin). TRAF-type zinc fingers lie at residues 134–189 (VHLK…IKLQ) and 190–248 (KHED…QQIK). Glycyl lysine isopeptide (Lys-Gly) (interchain with G-Cter in ubiquitin) cross-links involve residues Lys-155 and Lys-167. A coiled-coil region spans residues 266-337 (SNSLEKKVSL…KLKELDKEIR (72 aa)). Lys-328 is covalently cross-linked (Glycyl lysine isopeptide (Lys-Gly) (interchain with G-Cter in ubiquitin)). One can recognise an MATH domain in the interval 414 to 559 (NGVLIWKIRD…DDTIFIKVIV (146 aa)).

This sequence belongs to the TNF receptor-associated factor family. A subfamily. In terms of assembly, homotrimer. Heterotrimer with TRAF2 and TRAF5. Interacts with LTBR/TNFRSF3, TNFRSF4, TNFRSF5/CD40, TNFRSF8/CD30, TNFRSF13C TNFRSF17/BCMA, TLR4 and EDAR. Interacts with MAP3K5, MAP3K14, TRAIP/TRIP, TDP2/TTRAP, TANK/ITRAF and TRAF3IP1. Interaction with TNFRSF5/CD40 is modulated by TANK/ITRAF, which competes for the same binding site. Interacts with TICAM1. Interacts with TRAFD1. Interacts with OTUB1, OTUB2 and OTUD5. Interacts with RNF216, OPTN and TBK1. Identified in a complex with TRAF2, MAP3K14 and BIRC3. Upon exposure to bacterial lipopolysaccharide (LPS), recruited to a transient complex containing TLR4, TRAF3, TRAF6, IKBKG, MAP3K7, MYD88, TICAM1, BIRC2, BIRC3 and UBE2N. Interacts (via RING-type zinc finger domain) with SRC. Interacts with CARD14. Interacts (via MATH domain) with PTPN22; the interaction promotes TRAF3 polyubiquitination. Interacts with MAVS. Directly interacts with DDX3X; this interaction stimulates TRAF3 'Lys-63' ubiquitination. Interacts with IRF3. Interacts with IKBKE in the course of viral infection. Interacts with TRIM35. Interacts with GAPDH; promoting TRAF3 ubiquitination. Interacts with PPP3CA and PPP3CB. Interacts with RALGDS. Interacts with FBXO11. Post-translationally, undergoes 'Lys-48'-linked polyubiquitination, leading to its proteasomal degradation in response to signaling by TNFSF13B, TLR4 or through CD40. 'Lys-48'-linked polyubiquitinated form is deubiquitinated by OTUD7B, preventing TRAF3 proteolysis and over-activation of non-canonical NF-kappa-B. Undergoes 'Lys-63'-linked ubiquitination during early stages of virus infection, and 'Lys-48'-linked ubiquitination during later stages. Undergoes both 'Lys-48'-linked and 'Lys-63'-linked ubiquitination in response to TLR3 and TLR4 signaling. 'Lys-63'-linked ubiquitination can be mediated by TRIM35. Deubiquitinated by OTUB1, OTUB2 and OTUD5. Undergoes 'Lys-63'-linked deubiquitination by MYSM1 to terminate the pattern-recognition receptors/PRRs pathways. Ubiquitinated at Lys-328 by the SCF(FBXL2) complex, leading to its degradation by the proteasome. In terms of processing, undergoes 'Lys-48'-linked polyubiquitination, leading to its proteasomal degradation in response to signaling by TNFSF13B, TLR4 or through CD40. 'Lys-48'-linked polyubiquitinated form is deubiquitinated by OTUD7B, preventing TRAF3 proteolysis and over-activation of non-canonical NF-kappa-B. Undergoes 'Lys-63'-linked ubiquitination during early stages of virus infection, and 'Lys-48'-linked ubiquitination during later stages. Undergoes both 'Lys-48'-linked and 'Lys-63'-linked ubiquitination in response to TLR3 and TLR4 signaling. 'Lys-63'-linked ubiquitination can be mediated by TRIM35. Deubiquitinated by OTUB1, OTUB2 and OTUD5. Undergoes 'Lys-63'-linked deubiquitination by MYSM1 to terminate the pattern-recognition receptors/PRRs pathways. Also undergoes 'Lys-29'-linked ubiquitination on Cys-55 and Cys-123 by NEDD4L; leading to increased 'Lys-48'- and 'Lys-63'-linked ubiquitination as well as increased binding to TBK1. TLR4 signals emanating from bacteria containing vesicles trigger 'Lys-33'-linked polyubiquitination that promotes the assembly of the exocyst complex thereby connecting innate immune signaling to the cellular trafficking apparatus. Deubiquitinated by USP25 during viral infection, leading to TRAF3 stabilization and type I interferon production. 'Lys-63'-linked ubiquitination by FBXO11 in a NEDD8-dependent manner promotes the amplification of IFN-I signaling. As to expression, detected in bone marrow macrophages and spleen B-cells (at protein level). In adult, highest in brain. Also found in kidney, heart, thymus, spleen, lung, muscle, testis and ovary. Not found in liver.

It is found in the cytoplasm. Its subcellular location is the endosome. The protein localises to the mitochondrion. The enzyme catalyses S-ubiquitinyl-[E2 ubiquitin-conjugating enzyme]-L-cysteine + [acceptor protein]-L-lysine = [E2 ubiquitin-conjugating enzyme]-L-cysteine + N(6)-ubiquitinyl-[acceptor protein]-L-lysine.. Functionally, cytoplasmic E3 ubiquitin ligase that regulates various signaling pathways, such as the NF-kappa-B, mitogen-activated protein kinase (MAPK) and interferon regulatory factor (IRF) pathways, and thus controls a lot of biological processes in both immune and non-immune cell types. In TLR and RLR signaling pathways, acts as an E3 ubiquitin ligase promoting the synthesis of 'Lys-63'-linked polyubiquitin chains on several substrates such as ASC that lead to the activation of the type I interferon response or the inflammasome. Following the activation of certain TLRs such as TLR4, acts as a negative NF-kappa-B regulator, possibly to avoid unregulated inflammatory response, and its degradation via 'Lys-48'-linked polyubiquitination is required for MAPK activation and production of inflammatory cytokines. Alternatively, when TLR4 orchestrates bacterial expulsion, TRAF3 undergoes 'Lys-33'-linked polyubiquitination and subsequently binds to RALGDS, mobilizing the exocyst complex to rapidly expel intracellular bacteria back for clearance. Also acts as a constitutive negative regulator of the alternative NF-kappa-B pathway, which controls B-cell survival and lymphoid organ development. Required for normal antibody isotype switching from IgM to IgG. Plays a role T-cell dependent immune responses. Down-regulates proteolytic processing of NFKB2, and thereby inhibits non-canonical activation of NF-kappa-B. Promotes ubiquitination and proteasomal degradation of MAP3K14. The protein is TNF receptor-associated factor 3 of Mus musculus (Mouse).